Here is a 176-residue protein sequence, read N- to C-terminus: Peptide methionine sulfoxide reductase MsrA (176 aa).

The active site involves Cys-12.

It belongs to the MsrA Met sulfoxide reductase family.

The catalysed reaction is L-methionyl-[protein] + [thioredoxin]-disulfide + H2O = L-methionyl-(S)-S-oxide-[protein] + [thioredoxin]-dithiol. The enzyme catalyses [thioredoxin]-disulfide + L-methionine + H2O = L-methionine (S)-S-oxide + [thioredoxin]-dithiol. Functionally, has an important function as a repair enzyme for proteins that have been inactivated by oxidation. Catalyzes the reversible oxidation-reduction of methionine sulfoxide in proteins to methionine. This chain is Peptide methionine sulfoxide reductase MsrA, found in Thermus thermophilus (strain ATCC 27634 / DSM 579 / HB8).